A 276-amino-acid chain; its full sequence is Putative pyruvate, phosphate dikinase regulatory protein 2 (276 aa).

G146–T153 is a binding site for ADP.

This sequence belongs to the pyruvate, phosphate/water dikinase regulatory protein family. PDRP subfamily.

It catalyses the reaction N(tele)-phospho-L-histidyl/L-threonyl-[pyruvate, phosphate dikinase] + ADP = N(tele)-phospho-L-histidyl/O-phospho-L-threonyl-[pyruvate, phosphate dikinase] + AMP + H(+). The catalysed reaction is N(tele)-phospho-L-histidyl/O-phospho-L-threonyl-[pyruvate, phosphate dikinase] + phosphate + H(+) = N(tele)-phospho-L-histidyl/L-threonyl-[pyruvate, phosphate dikinase] + diphosphate. Bifunctional serine/threonine kinase and phosphorylase involved in the regulation of the pyruvate, phosphate dikinase (PPDK) by catalyzing its phosphorylation/dephosphorylation. This is Putative pyruvate, phosphate dikinase regulatory protein 2 from Enterococcus faecalis (strain ATCC 700802 / V583).